A 454-amino-acid polypeptide reads, in one-letter code: UDP-N-acetylmuramoylalanine--D-glutamate ligase (454 aa).

114–120 (GTNGKTT) contributes to the ATP binding site.

The protein belongs to the MurCDEF family.

The protein resides in the cytoplasm. It catalyses the reaction UDP-N-acetyl-alpha-D-muramoyl-L-alanine + D-glutamate + ATP = UDP-N-acetyl-alpha-D-muramoyl-L-alanyl-D-glutamate + ADP + phosphate + H(+). It functions in the pathway cell wall biogenesis; peptidoglycan biosynthesis. Cell wall formation. Catalyzes the addition of glutamate to the nucleotide precursor UDP-N-acetylmuramoyl-L-alanine (UMA). This chain is UDP-N-acetylmuramoylalanine--D-glutamate ligase, found in Desulfitobacterium hafniense (strain Y51).